Here is a 156-residue protein sequence, read N- to C-terminus: Ribonuclease H (156 aa).

Positions 2-144 constitute an RNase H type-1 domain; it reads TMKNVQAFTD…CDVLARTQAS (143 aa). Mg(2+) is bound by residues Asp11, Glu49, Asp71, and Asp136.

This sequence belongs to the RNase H family. In terms of assembly, monomer. It depends on Mg(2+) as a cofactor.

Its subcellular location is the cytoplasm. It carries out the reaction Endonucleolytic cleavage to 5'-phosphomonoester.. In terms of biological role, endonuclease that specifically degrades the RNA of RNA-DNA hybrids. The protein is Ribonuclease H of Nitratidesulfovibrio vulgaris (strain DSM 19637 / Miyazaki F) (Desulfovibrio vulgaris).